A 132-amino-acid chain; its full sequence is Small ribosomal subunit protein uS8 (132 aa).

It belongs to the universal ribosomal protein uS8 family. Part of the 30S ribosomal subunit. Contacts proteins S5 and S12.

Functionally, one of the primary rRNA binding proteins, it binds directly to 16S rRNA central domain where it helps coordinate assembly of the platform of the 30S subunit. In Christiangramia forsetii (strain DSM 17595 / CGMCC 1.15422 / KT0803) (Gramella forsetii), this protein is Small ribosomal subunit protein uS8.